We begin with the raw amino-acid sequence, 443 residues long: Probable glycine dehydrogenase (decarboxylating) subunit 1 (443 aa).

Belongs to the GcvP family. N-terminal subunit subfamily. The glycine cleavage system is composed of four proteins: P, T, L and H. In this organism, the P 'protein' is a heterodimer of two subunits.

The catalysed reaction is N(6)-[(R)-lipoyl]-L-lysyl-[glycine-cleavage complex H protein] + glycine + H(+) = N(6)-[(R)-S(8)-aminomethyldihydrolipoyl]-L-lysyl-[glycine-cleavage complex H protein] + CO2. The glycine cleavage system catalyzes the degradation of glycine. The P protein binds the alpha-amino group of glycine through its pyridoxal phosphate cofactor; CO(2) is released and the remaining methylamine moiety is then transferred to the lipoamide cofactor of the H protein. The polypeptide is Probable glycine dehydrogenase (decarboxylating) subunit 1 (Nitratidesulfovibrio vulgaris (strain DSM 19637 / Miyazaki F) (Desulfovibrio vulgaris)).